The primary structure comprises 417 residues: Dibenzothiophene monooxygenase (417 aa).

FMN contacts are provided by residues Y96, N129 to N134, K159 to S163, R282, A369 to R370, and H391. Residues S131–K142 are lid loop.

The protein belongs to the DszC flavin monooxygenase family. Homotetramer. Homodimer. The cofactor is FAD. Requires NADH as cofactor.

It is found in the cytoplasm. The catalysed reaction is dibenzothiophene + 2 FMNH2 + 2 O2 = dibenzothiophene 5,5-dioxide + 2 FMN + 2 H2O + 2 H(+). It catalyses the reaction dibenzothiophene + FMNH2 + O2 = dibenzothiophene 5-oxide + FMN + H2O + H(+). It carries out the reaction dibenzothiophene 5-oxide + FMNH2 + O2 = dibenzothiophene 5,5-dioxide + FMN + H2O + H(+). The protein operates within sulfur metabolism; dibenzothiophene degradation. Functionally, catalyzes the first step of the '4S' desulfurization pathway that removes covalently bound sulfur from dibenzothiophene (DBT) without breaking carbon-carbon bonds. Sulfur dioxygenase which converts DBT to DBT-sulfone (DBTO2 or DBT 5,5-dioxide) in a stepwise manner. In DBTO (dibenzothiophene-5-oxide) was reported not to be a substrate, in it is reported to be a substrate. Can also use benzyl sulfide and benzyl sulfoxide as substrates, although benzyl sulfoxide is a poor substrate. The pathway substrate specificity has been augmented using mutagenesis, however no mutations allowed use of alkylated thiophenes. The sequence is that of Dibenzothiophene monooxygenase from Rhodococcus qingshengii.